Here is a 347-residue protein sequence, read N- to C-terminus: Leucine-rich repeat-containing protein 69 (347 aa).

LRR repeat units lie at residues 38 to 60, 61 to 82, 84 to 105, 108 to 129, 131 to 153, 154 to 175, 177 to 199, and 200 to 222; these read GLKT…CNLT, QLTT…MKYL, SLKN…ACDG, NLIL…VSRL, SLTY…CFLE, NLVE…IKFL, KLQK…CDLK, and KLRI…QDLK.

It belongs to the LRRC69 family.

In Homo sapiens (Human), this protein is Leucine-rich repeat-containing protein 69 (LRRC69).